We begin with the raw amino-acid sequence, 121 residues long: MVRILANGEIVQDDDPRVRTTTQPPRGSIPRQSFFNRGHGAPPGGPGPRQQQAGARLGAAQSPFNDLNRQLVNMGFPQWHLGNHAVEPVTSILLLFLLMMLGVRGLLLVGLVYLVSHLSQR.

The tract at residues 12 to 58 (QDDDPRVRTTTQPPRGSIPRQSFFNRGHGAPPGGPGPRQQQAGARLG) is disordered. A compositionally biased stretch (polar residues) spans 19–35 (RTTTQPPRGSIPRQSFF). Residue Ser33 is modified to Phosphoserine. Residues 48-58 (PRQQQAGARLG) are compositionally biased toward low complexity. Ser62 bears the Phosphoserine mark. A helical transmembrane segment spans residues 92–112 (ILLLFLLMMLGVRGLLLVGLV).

It belongs to the FAM241 family.

The protein resides in the membrane. May play a role in lysosome homeostasis. This is Protein FAM241B from Homo sapiens (Human).